The primary structure comprises 249 residues: Selenoprotein BthD (249 aa).

Residues 1–22 (MPPKRNKKAEAPIAERDAGEEL) are disordered. Basic and acidic residues predominate over residues 8–19 (KAEAPIAERDAG). The cysteinyl-selenocysteine (Cys-Sec); redox-active cross-link spans 34–37 (CRSU). U37 is a non-standard amino acid (selenocysteine). Residues 122 to 249 (QQESKEQTNT…EATAGAKRRR (128 aa)) are disordered. Residue S147 is modified to Phosphoserine. Residues 175-198 (EQKSEEEPTQVDSKEAKQSKELVK) are compositionally biased toward basic and acidic residues. A compositionally biased stretch (basic residues) spans 199-210 (TKRQPKAQKKQA).

In terms of tissue distribution, expressed in the developing salivary gland at late stages of embryogenesis. Also expressed in brain, neuroblast and wing disk.

The protein localises to the cytoplasm. It is found in the secreted. Functionally, may be involved in a redox-related process. Required for survival and specifically for salivary gland morphogenesis. This chain is Selenoprotein BthD (BthD), found in Drosophila melanogaster (Fruit fly).